We begin with the raw amino-acid sequence, 356 residues long: Peptide chain release factor 1 (356 aa).

The residue at position 232 (Gln232) is an N5-methylglutamine.

Belongs to the prokaryotic/mitochondrial release factor family. Methylated by PrmC. Methylation increases the termination efficiency of RF1.

The protein resides in the cytoplasm. Its function is as follows. Peptide chain release factor 1 directs the termination of translation in response to the peptide chain termination codons UAG and UAA. This Thermoanaerobacter pseudethanolicus (strain ATCC 33223 / 39E) (Clostridium thermohydrosulfuricum) protein is Peptide chain release factor 1.